Reading from the N-terminus, the 89-residue chain is MGDVVATIKVMPESPDVDLEALKKEIQERIPEGTELHKIDEEPIAFGLVALNVMVVVGDAEGGTEAAEESLSGIEGVSNIEVTDVRRLM.

This sequence belongs to the EF-1-beta/EF-1-delta family.

Functionally, promotes the exchange of GDP for GTP in EF-1-alpha/GDP, thus allowing the regeneration of EF-1-alpha/GTP that could then be used to form the ternary complex EF-1-alpha/GTP/AAtRNA. The chain is Elongation factor 1-beta (ef1b) from Methanothermobacter thermautotrophicus (strain ATCC 29096 / DSM 1053 / JCM 10044 / NBRC 100330 / Delta H) (Methanobacterium thermoautotrophicum).